Here is a 338-residue protein sequence, read N- to C-terminus: Holliday junction branch migration complex subunit RuvB (338 aa).

Positions 4-185 (EDQKILDAKP…FGIVAHMQFY (182 aa)) are large ATPase domain (RuvB-L). ATP contacts are provided by residues Leu-24, Arg-25, Gly-66, Lys-69, Thr-70, Thr-71, 132-134 (EDF), Arg-175, Tyr-185, and Arg-222. Position 70 (Thr-70) interacts with Mg(2+). Residues 186-256 (PVSDLKLIAK…IVDNALNKLH (71 aa)) form a small ATPAse domain (RuvB-S) region. The head domain (RuvB-H) stretch occupies residues 259-338 (ARGLDETDLK…LQIPYQTGLS (80 aa)). Positions 314 and 319 each coordinate DNA.

Belongs to the RuvB family. In terms of assembly, homohexamer. Forms an RuvA(8)-RuvB(12)-Holliday junction (HJ) complex. HJ DNA is sandwiched between 2 RuvA tetramers; dsDNA enters through RuvA and exits via RuvB. An RuvB hexamer assembles on each DNA strand where it exits the tetramer. Each RuvB hexamer is contacted by two RuvA subunits (via domain III) on 2 adjacent RuvB subunits; this complex drives branch migration. In the full resolvosome a probable DNA-RuvA(4)-RuvB(12)-RuvC(2) complex forms which resolves the HJ.

The protein resides in the cytoplasm. It catalyses the reaction ATP + H2O = ADP + phosphate + H(+). The RuvA-RuvB-RuvC complex processes Holliday junction (HJ) DNA during genetic recombination and DNA repair, while the RuvA-RuvB complex plays an important role in the rescue of blocked DNA replication forks via replication fork reversal (RFR). RuvA specifically binds to HJ cruciform DNA, conferring on it an open structure. The RuvB hexamer acts as an ATP-dependent pump, pulling dsDNA into and through the RuvAB complex. RuvB forms 2 homohexamers on either side of HJ DNA bound by 1 or 2 RuvA tetramers; 4 subunits per hexamer contact DNA at a time. Coordinated motions by a converter formed by DNA-disengaged RuvB subunits stimulates ATP hydrolysis and nucleotide exchange. Immobilization of the converter enables RuvB to convert the ATP-contained energy into a lever motion, pulling 2 nucleotides of DNA out of the RuvA tetramer per ATP hydrolyzed, thus driving DNA branch migration. The RuvB motors rotate together with the DNA substrate, which together with the progressing nucleotide cycle form the mechanistic basis for DNA recombination by continuous HJ branch migration. Branch migration allows RuvC to scan DNA until it finds its consensus sequence, where it cleaves and resolves cruciform DNA. The polypeptide is Holliday junction branch migration complex subunit RuvB (Oenococcus oeni (strain ATCC BAA-331 / PSU-1)).